The primary structure comprises 117 residues: MNNDAKFPIQLTDFAARKVKFFTENEIINSNSHLKLRVYIIGGGCSGFQYRFILDDKISSDDCIVENNGVSLVIDPMSLQYLFGGIIDYYEGLEGSRFVVINPNAKNTCSCGSSFSV.

Iron-sulfur cluster contacts are provided by cysteine 45, cysteine 109, and cysteine 111.

Belongs to the HesB/IscA family. Homodimer. Iron-sulfur cluster serves as cofactor.

Functionally, required for insertion of 4Fe-4S clusters for at least IspG. The sequence is that of Iron-sulfur cluster insertion protein ErpA from Blochmanniella pennsylvanica (strain BPEN).